The chain runs to 119 residues: Ribonuclease P protein component (119 aa).

It belongs to the RnpA family. Consists of a catalytic RNA component (M1 or rnpB) and a protein subunit.

It carries out the reaction Endonucleolytic cleavage of RNA, removing 5'-extranucleotides from tRNA precursor.. RNaseP catalyzes the removal of the 5'-leader sequence from pre-tRNA to produce the mature 5'-terminus. It can also cleave other RNA substrates such as 4.5S RNA. The protein component plays an auxiliary but essential role in vivo by binding to the 5'-leader sequence and broadening the substrate specificity of the ribozyme. This chain is Ribonuclease P protein component, found in Chlamydia muridarum (strain MoPn / Nigg).